The chain runs to 233 residues: Merozoite surface protein 1 (233 aa).

A signal peptide spans 1-19; the sequence is MKIIFFLCSFLFFIINTQC. Residues 58–67 show a composition bias toward polar residues; sequence SGTAVTTSTP. The segment at 58–110 is disordered; sequence SGTAVTTSTPGSKGSVASGGSGGSVASGGSVASGGSGNSRRTNPSDNSSDSDA. Positions 74–94 are enriched in gly residues; the sequence is ASGGSGGSVASGGSVASGGSG. The span at 95-107 shows a compositional bias: polar residues; it reads NSRRTNPSDNSSD. N104 carries N-linked (GlcNAc...) asparagine glycosylation.

In terms of assembly, forms a complex composed of subunits p83, p30, p38, and p42 which remain non-covalently associated; the complex is formed at the merozoite surface prior to egress from host erythrocytes. Forms a complex composed of processed MSP1 subunits, MSP6 subunit p36 and MSP7; the complex is formed at the merozoite surface prior to egress from host erythrocytes. Within the complex, interacts (via subunit p38) with MSP6 subunit p36 and (via subunits p83, p30 and p38) with MSP7 (via subunit p22). Forms a complex composed of MSP1, MSP6, DBLMSP1 and DBLMSP2. Within the complex, interacts (via subunit p38) with DBLMSP1 and DBLMSP2. Forms a complex composed of MSP1, and rhoptry proteins RhopH3, RAP1 and CLAG9/RhopH3. Within the complex, interacts (via subunits p42 and p19) with RhopH3 (via C-terminus). Forms a complex composed of MSP1, MSP6, MSP7, MSP9 and MSP3; within the complex, MSP6 and MSP9 mediate the binding to the host erythrocyte. Interacts (via subunits p19 and p42) with MSP9; the interaction is direct; MSP1 subunits p19 or p42, and MSP9 form a co-ligand complex that interacts with host SLC4A1/Band 3 protein. May interact with PFD6. Interacts with host spectrin. The p190 precursor is cleaved by SUB1 prior to merozoite egress into 4 subunits p83, p30, p38, and p42 which remain non-covalently associated. SUB1-mediated proteolytic cleavage occurs in an orderly manner; the first cleavage occurs at the p83/p30 site, followed by cleavage at the p30/p38 site, the last cleavage occurs at the p38/p42 site. The order of cleavage is essential for parasite viability. SUB1-mediated processing is essential for merozoite egress. In a second processing step during erythrocyte invasion, p42 is cleaved by SUB2 into p33 and p19; the latter remains attached to the merozoite surface via its GPI-anchor and stays on the surface during the subsequent ring stage.

The protein resides in the cell membrane. It is found in the secreted. In terms of biological role, during the asexual blood stage, involved in merozoite egress from host erythrocytes possibly via its interaction with the host cytoskeleton protein spectrin resulting in the destabilization of the host cytoskeleton and thus leading to erythrocyte cell membrane rupture. Involved in the binding to host erythrocytes and is required for host erythrocyte invasion. This Plasmodium falciparum (isolate CDC / Honduras) protein is Merozoite surface protein 1.